We begin with the raw amino-acid sequence, 2039 residues long: Calcium-channel protein CCH1 (2039 aa).

Disordered regions lie at residues 1 to 171 (MQGR…PPRS) and 206 to 288 (PQLK…PQKE). Over residues 64-80 (STEEKKGDEYNGNDKDS) the composition is skewed to basic and acidic residues. An N-linked (GlcNAc...) asparagine glycan is attached at asparagine 98. 2 stretches are compositionally biased toward low complexity: residues 122–132 (SPSTKSAKSSS) and 147–164 (FSSY…SPSS). Residues 209–226 (KSEKSRPVSDVGEDRGEG) show a composition bias toward basic and acidic residues. N-linked (GlcNAc...) asparagine glycosylation is found at asparagine 257 and asparagine 269. Basic residues predominate over residues 271–281 (SRKKPSPKFFH). A Phosphoserine modification is found at serine 284. Residues 346-366 (YSLLYNTLLTFYAILLAIRTY) form a helical membrane-spanning segment. An N-linked (GlcNAc...) asparagine glycan is attached at asparagine 379. The chain crosses the membrane as a helical span at residues 384–404 (FIFILSACFTGNDIAKIIAFG). An N-linked (GlcNAc...) asparagine glycan is attached at asparagine 559. 3 consecutive transmembrane segments (helical) span residues 563 to 583 (MLVY…QGSF), 658 to 678 (IVNS…TDLM), and 691 to 711 (LFFI…LIAV). Asparagine 754 and asparagine 760 each carry an N-linked (GlcNAc...) asparagine glycan. 3 consecutive transmembrane segments (helical) span residues 766–786 (LAIY…DIGM), 809–829 (ISIV…PNMW), and 841–861 (FIIS…VLGH). Asparagine 882 and asparagine 900 each carry an N-linked (GlcNAc...) asparagine glycan. The next 2 helical transmembrane spans lie at 904 to 924 (FYFF…EGVI) and 942 to 962 (SFLS…LYAL). Asparagine 968 carries an N-linked (GlcNAc...) asparagine glycan. The helical transmembrane segment at 978–998 (FFIIWFLLSNSVILNIFIALI) threads the bilayer. N-linked (GlcNAc...) asparagine glycosylation occurs at asparagine 1153. A helical transmembrane segment spans residues 1207–1227 (VFVFIFALATILLIVCSCYVT). An N-linked (GlcNAc...) asparagine glycan is attached at asparagine 1240. A run of 2 helical transmembrane segments spans residues 1247–1267 (CAFI…DGFI) and 1277–1297 (PWNF…IAYL). Asparagine 1302 carries an N-linked (GlcNAc...) asparagine glycan. Helical transmembrane passes span 1340-1360 (IFEA…WGLS) and 1408-1428 (FASA…VDLL). Residue asparagine 1433 is glycosylated (N-linked (GlcNAc...) asparagine). 5 helical membrane-spanning segments follow: residues 1452–1472 (FLVL…VSFI), 1529–1549 (NFYY…MLLS), 1554–1574 (PGNL…VFLI), 1596–1616 (IRLS…HVPA), and 1618–1638 (HYWF…FIIP). Asparagine 1640 is a glycosylation site (N-linked (GlcNAc...) asparagine). A helical membrane pass occupies residues 1654–1674 (LPPILSLTYTWGVLFLVYAIA). N-linked (GlcNAc...) asparagine glycans are attached at residues asparagine 1687 and asparagine 1732. The helical transmembrane segment at 1748–1768 (LMSWNIISMYIFVNMFVSLII) threads the bilayer. N-linked (GlcNAc...) asparagine glycosylation is found at asparagine 1770 and asparagine 1785. Residues 1787–1822 (SEIKKYIEAWSKFDTDGTGELELSYLPRIMHSFDGP) enclose the EF-hand domain. The interval 2011-2039 (PRMNQDSTMEPPEEPIDNNDDSANDLIDR) is disordered. Residues 2021–2033 (PPEEPIDNNDDSA) show a composition bias toward acidic residues.

Belongs to the calcium channel alpha-1 subunit (TC 1.A.1.11) family. In terms of assembly, interacts with MID1 to form a Ca(2+) influx channel.

Its subcellular location is the cell membrane. Voltage-gated, high-affinity calcium channel that functions together with MID1 to mediate calcium entry into cells. Required during conditions of environmental stress. This Saccharomyces cerevisiae (strain ATCC 204508 / S288c) (Baker's yeast) protein is Calcium-channel protein CCH1 (CCH1).